Here is a 798-residue protein sequence, read N- to C-terminus: Protocadherin beta-13 (798 aa).

Positions 1 to 28 (MEASGKLICRQRQVLFSFLLLGLSLAGA) are cleaved as a signal peptide. Residues 29 to 690 (AEPRSYSVVE…AQADSLTVYL (662 aa)) are Extracellular-facing. Cadherin domains lie at 36 to 134 (VVEE…SPVF), 139 to 243 (MLVK…APEF), 248 to 348 (YRVQ…APEV), 353 to 451 (FTSP…APAF), and 456 to 561 (YTLF…SPFV). N-linked (GlcNAc...) asparagine glycosylation is found at asparagine 418 and asparagine 436. The N-linked (GlcNAc...) asparagine glycan is linked to asparagine 567. The Cadherin 6 domain occupies 568–671 (GSAPCTELVP…LVDGFSQPYL (104 aa)). The chain crosses the membrane as a helical span at residues 691 to 711 (VVALASVSSLFLFSVLLFVAV). Residues 712–798 (RLCRRSRAAS…FPNNFGFNIQ (87 aa)) are Cytoplasmic-facing.

The protein resides in the cell membrane. In terms of biological role, potential calcium-dependent cell-adhesion protein. May be involved in the establishment and maintenance of specific neuronal connections in the brain. The chain is Protocadherin beta-13 (PCDHB13) from Pan troglodytes (Chimpanzee).